We begin with the raw amino-acid sequence, 40 residues long: Photosystem II reaction center protein Y (40 aa).

The chain crosses the membrane as a helical span at residues 4–22 (LLVITLPILAAIGWVTLNI).

This sequence belongs to the PsbY family. PSII is composed of 1 copy each of membrane proteins PsbA, PsbB, PsbC, PsbD, PsbE, PsbF, PsbH, PsbI, PsbJ, PsbK, PsbL, PsbM, PsbT, PsbX, PsbY, Psb30/Ycf12, peripheral proteins PsbO, CyanoQ (PsbQ), PsbU, PsbV and a large number of cofactors. It forms dimeric complexes.

The protein localises to the cellular thylakoid membrane. Loosely associated component of the core of photosystem II (PSII), it is not always seen in crystals. PSII is a light-driven water plastoquinone oxidoreductase, using light energy to abstract electrons from H(2)O, generating a proton gradient subsequently used for ATP formation. This Prochlorococcus marinus (strain SARG / CCMP1375 / SS120) protein is Photosystem II reaction center protein Y.